Reading from the N-terminus, the 207-residue chain is Fibroblast growth factor 18 (207 aa).

The first 27 residues, 1-27 (MYSAPSACTCLCLHFLLLCFQVQVLAA), serve as a signal peptide directing secretion. N-linked (GlcNAc...) asparagine glycosylation is present at asparagine 39. An intrachain disulfide couples cysteine 109 to cysteine 127. The N-linked (GlcNAc...) asparagine glycan is linked to asparagine 137. The segment at 157–183 (GRPRKGPKTRENQQDVHFMKRYPKGQT) is disordered. Positions 164-174 (KTRENQQDVHF) are enriched in basic and acidic residues.

The protein belongs to the heparin-binding growth factors family. Interacts with FGFR3 and FGFR4. In terms of tissue distribution, mainly expressed in the lung. Not detected in brain, heart, liver, kidney and small intestine.

The protein resides in the secreted. Functionally, plays an important role in the regulation of cell proliferation, cell differentiation and cell migration. Required for normal ossification and bone development. Stimulates hepatic and intestinal proliferation. The sequence is that of Fibroblast growth factor 18 (Fgf18) from Rattus norvegicus (Rat).